Reading from the N-terminus, the 76-residue chain is UPF0291 protein GK1331 (76 aa).

The interval 57–76 (PSGNDVTPKKLKESQRRRFH) is disordered. The span at 63–76 (TPKKLKESQRRRFH) shows a compositional bias: basic and acidic residues.

It belongs to the UPF0291 family.

It is found in the cytoplasm. This is UPF0291 protein GK1331 from Geobacillus kaustophilus (strain HTA426).